Reading from the N-terminus, the 591-residue chain is Protein enabled homolog (591 aa).

The region spanning 1–111 (MSEQSICQAR…SAMMHALEVL (111 aa)) is the WH1 domain. Polar residues predominate over residues 115–136 (ETGPTLPRQNSQLPAQVQNGPS). The segment at 115–146 (ETGPTLPRQNSQLPAQVQNGPSQEELEIQRRQ) is disordered. Serine 125 is modified (phosphoserine). Residues 135-265 (PSQEELEIQR…LEWERERRIS (131 aa)) adopt a coiled-coil conformation. 9 consecutive repeat copies span residues 156-160 (LERER), 161-165 (LERER), 166-170 (MERER), 171-175 (LERER), 176-180 (LERER), 181-185 (LERER), 186-190 (LEQEQ), 191-195 (LERER), and 196-200 (QERER). Residues 156 to 200 (LERERLERERMERERLERERLERERLERERLEQEQLERERQERER) form a 9 X 5 AA tandem repeats of [LMQ]-E-[QR]-E-[QR] region. Positions 221 to 264 (RLDRERQERQERERLERLERERQERERQEQLEREQLEWERERRI) are enriched in basic and acidic residues. The tract at residues 221–379 (RLDRERQERQ…PPLPASGFFL (159 aa)) is disordered. Phosphoserine; by PKA is present on serine 265. Residues 275-305 (TPLNSVLGDSSASEPGLQAASQPAETPSQQG) are compositionally biased toward polar residues. 2 stretches are compositionally biased toward pro residues: residues 311–323 (LAPP…PPGP) and 330–373 (LPPP…PPLP). The interval 391–411 (GLAAAIAGAKLRKVSRMEDTS) is EVH2 block A. Residues 391-588 (GLAAAIAGAK…DAIRQELSKS (198 aa)) are EVH2. The KLKR signature appears at 400–403 (KLRK). Positions 405-549 (SRMEDTSFPS…LSQPSANGVQ (145 aa)) are disordered. A compositionally biased stretch (gly residues) spans 432–443 (RGNGPLPLGGSG). The tract at residues 442-459 (SGLMEEMSALLARRRRIA) is EVH2 block B. Position 465 is a phosphothreonine (isoleucine 465). Phosphoserine is present on residues glutamate 471 and glutamate 475. Polar residues-rich tracts occupy residues 479–491 (PVTS…STPE) and 499–509 (RTNTMNGSKSP). Position 502 is a phosphothreonine (threonine 502). A phosphoserine mark is found at serine 506, serine 508, and serine 512. Over residues 538–549 (TPLSQPSANGVQ) the composition is skewed to polar residues. Residues 554–588 (DYDRLKQDILDEMRKELTKLKEELIDAIRQELSKS) are EVH2 block C. The stretch at 557-587 (RLKQDILDEMRKELTKLKEELIDAIRQELSK) forms a coiled coil.

Belongs to the Ena/VASP family. Homotetramer. Interacts with APBB1IP, APBB1, PFN1 and ROBO4. Isoforms, containing the polyproline-rich regions with PPLP motifs, bind the WW domain of APBB1IP. Isoforms, containing the PPSY motif, bind, in vitro, to the WW2 and WW3 domains of NEDD4 and to the WW1 domain of YAP1. Binds the SH3 domain of BAIAP2-alpha but only after the autoinhibitory region of BAIAP2-alpha has been blocked by interaction with CDC42. Interacts, via the EVH1/WH1 domain, with the Pro-rich domains from VCL, ZYX and Listeria monocytogenes actA and with TES (via LIM domains). The TES LIM domain and the Pro-rich domains from VCL or ZYX compete for the same binding site. Interaction with ZYX is important for targeting ENAH to focal adhesions and enhances production of actin-rich structures at the apical surface of cells. Interacts, through the Pro-rich region, with the C-terminal SH3 domain of DNMPB. Binds GPHN. Interacts with FAT1 (via EVH1 domains). Heterotrimer with TES and ACTL7A. Interacts with PRPF40A. In terms of processing, NTN1-induced PKA phosphorylation on Ser-265 directly parallels the formation of filopodial protrusions. Expressed in myoepithelia of parotid, breast, bronchial glands and sweat glands. Expressed in colon-rectum muscolaris mucosae epithelium, pancreas acinar ductal epithelium, endometrium epithelium, prostate fibromuscolar stroma and placenta vascular media. Overexpressed in a majority of breast cancer cell lines and primary breast tumor lesions.

It is found in the cytoplasm. The protein localises to the cytoskeleton. The protein resides in the cell projection. It localises to the lamellipodium. Its subcellular location is the filopodium. It is found in the synapse. The protein localises to the cell junction. The protein resides in the focal adhesion. Functionally, ena/VASP proteins are actin-associated proteins involved in a range of processes dependent on cytoskeleton remodeling and cell polarity such as axon guidance and lamellipodial and filopodial dynamics in migrating cells. ENAH induces the formation of F-actin rich outgrowths in fibroblasts. Acts synergistically with BAIAP2-alpha and downstream of NTN1 to promote filipodia formation. This chain is Protein enabled homolog (ENAH), found in Homo sapiens (Human).